The primary structure comprises 257 residues: Coenzyme F420:L-glutamate ligase (257 aa).

Residues 9 to 12 (VPEV), 38 to 39 (ST), and K43 contribute to the GTP site. Residue D113 participates in a divalent metal cation binding. Position 116 (N116) interacts with GTP. A divalent metal cation-binding residues include D154, T155, and E212. 210–217 (TGEGDGGT) provides a ligand contact to GTP.

This sequence belongs to the CofE family. Homodimer. Requires Mg(2+) as cofactor. Mn(2+) serves as cofactor. K(+) is required as a cofactor.

The enzyme catalyses oxidized coenzyme F420-0 + GTP + L-glutamate = oxidized coenzyme F420-1 + GDP + phosphate + H(+). It catalyses the reaction oxidized coenzyme F420-1 + GTP + L-glutamate = oxidized coenzyme F420-2 + GDP + phosphate + H(+). It participates in cofactor biosynthesis; coenzyme F420 biosynthesis. Catalyzes the GTP-dependent successive addition of two or more gamma-linked L-glutamates to the L-lactyl phosphodiester of 7,8-didemethyl-8-hydroxy-5-deazariboflavin (F420-0) to form coenzyme F420-0-glutamyl-glutamate (F420-2) or polyglutamated F420 derivatives. The protein is Coenzyme F420:L-glutamate ligase of Haloarcula marismortui (strain ATCC 43049 / DSM 3752 / JCM 8966 / VKM B-1809) (Halobacterium marismortui).